The chain runs to 192 residues: MGKGCKVVVCGMASVGKTAILEQLLYGSHTVGAETSDTQEDIYVASVETDRGVREQLRLYDTRGLREGLDLPKHFFSVADGFVLVYSVDCLESFKKVEVLKKEIDRSRDKKEVMVMVLGNKCELRERRQVDQDTAQQWARGEKVKLWEVTVTDRSTLIEPFTSLTSRLTQPQSKSAFPLPGRKSKGTPSNDI.

A small GTPase-like region spans residues M1–I192. Residue G11–T18 participates in GTP binding. An Effector region motif is present at residues T35–Y43. GTP contacts are provided by residues D61–L65 and N120–E123. The segment at T169–I192 is disordered.

It belongs to the small GTPase superfamily. Ras family. KappaB-Ras subfamily.

It is found in the cytoplasm. Atypical Ras-like protein that acts as a potent regulator of NF-kappa-B activity by preventing the degradation of NF-kappa-B inhibitor beta (NFKBIB) by most signals, explaining why NFKBIB is more resistant to degradation. This is NF-kappa-B inhibitor-interacting Ras-like protein 1 (nkiras1) from Danio rerio (Zebrafish).